The primary structure comprises 433 residues: Chaperone SurA (433 aa).

The N-terminal stretch at 1–24 is a signal peptide; sequence MDGIKLLLSIIILYFYTYINCAIA. PpiC domains lie at 173 to 274 and 285 to 385; these read NTTF…KVHD and ITEV…QLQN.

It localises to the periplasm. The catalysed reaction is [protein]-peptidylproline (omega=180) = [protein]-peptidylproline (omega=0). Its function is as follows. Chaperone involved in the correct folding and assembly of outer membrane proteins. Recognizes specific patterns of aromatic residues and the orientation of their side chains, which are found more frequently in integral outer membrane proteins. May act in both early periplasmic and late outer membrane-associated steps of protein maturation. The chain is Chaperone SurA from Baumannia cicadellinicola subsp. Homalodisca coagulata.